Here is a 204-residue protein sequence, read N- to C-terminus: MGAYKYMQKLWRKKQSNVMRFLLRVRCWQYRQLSSLHRAPRPTRPDKARRLGYKAKQGYVIYRIRVRRGGRKRPVPKGATYGKPVHHGVNQIKFARSLQSVAEERAGRHCGGLRVLNSYWVGEDSTYKFFEVILIDTFHKAIRRNPDTQWITKAVHKHREMRGLTSAGKKSRGLGKGHKFHLTIGGSRRAAWKRRNTLQLHRYR.

Belongs to the eukaryotic ribosomal protein eL15 family. In terms of assembly, component of the large ribosomal subunit.

It localises to the cytoplasm. In terms of biological role, component of the large ribosomal subunit. The ribosome is a large ribonucleoprotein complex responsible for the synthesis of proteins in the cell. This is Large ribosomal subunit protein eL15 (rpl15) from Megalobrama amblycephala (Chinese blunt snout bream).